Reading from the N-terminus, the 263-residue chain is Endonuclease 8 (263 aa).

Residue Pro2 is the Schiff-base intermediate with DNA of the active site. The active-site Proton donor is Glu3. The Proton donor; for beta-elimination activity role is filled by Lys53. Residues Gln70, Arg125, and Asn169 each contribute to the DNA site. Residues 229–263 (KVFHRDGEPCERCGGIIEKTTLSSRPFYWCPGCQH) form an FPG-type zinc finger. Arg253 acts as the Proton donor; for delta-elimination activity in catalysis.

It belongs to the FPG family. Zn(2+) is required as a cofactor.

The enzyme catalyses 2'-deoxyribonucleotide-(2'-deoxyribose 5'-phosphate)-2'-deoxyribonucleotide-DNA = a 3'-end 2'-deoxyribonucleotide-(2,3-dehydro-2,3-deoxyribose 5'-phosphate)-DNA + a 5'-end 5'-phospho-2'-deoxyribonucleoside-DNA + H(+). Involved in base excision repair of DNA damaged by oxidation or by mutagenic agents. Acts as a DNA glycosylase that recognizes and removes damaged bases. Has a preference for oxidized pyrimidines, such as thymine glycol, 5,6-dihydrouracil and 5,6-dihydrothymine. Has AP (apurinic/apyrimidinic) lyase activity and introduces nicks in the DNA strand. Cleaves the DNA backbone by beta-delta elimination to generate a single-strand break at the site of the removed base with both 3'- and 5'-phosphates. In Escherichia coli O127:H6 (strain E2348/69 / EPEC), this protein is Endonuclease 8.